The chain runs to 279 residues: Reaction center protein L chain (279 aa).

3 consecutive transmembrane segments (helical) span residues 33–56 (GFFGVTTLFFSVLGTALIIWGASQ), 85–113 (GLWQIITVCAIGAFVSWALREVEICRKLG), and 116–141 (YHVPIAFSFAILAYVTLVVIRPILMG). Residues histidine 154 and histidine 174 each coordinate (7R,8Z)-bacteriochlorophyll b. The helical transmembrane segment at 171–200 (NPAHMLAITFFFTTTLAMSMHGGLILSAAN) threads the bilayer. Histidine 191 lines the Fe cation pocket. Phenylalanine 217 contributes to the a ubiquinone binding site. The helical transmembrane segment at 226–252 (GSLGIHRLGLFLALSAAFWSAVCIVIS) threads the bilayer. Histidine 231 serves as a coordination point for Fe cation.

Belongs to the reaction center PufL/M/PsbA/D family. In terms of assembly, reaction center is composed of four bacteriochlorophylls, two bacteriopheophytins, two ubiquinones, one iron, and three highly hydrophobic polypeptide chains (designated L, M, and H).

The protein localises to the cell inner membrane. The reaction center is a membrane-bound complex that mediates the initial photochemical event in the electron transfer process of photosynthesis. This Rubrivivax gelatinosus (strain NBRC 100245 / IL144) protein is Reaction center protein L chain (pufL).